Here is a 344-residue protein sequence, read N- to C-terminus: Dihydroorotate dehydrogenase (quinone) (344 aa).

Residues 65-69 (AGLDK) and T89 each bind FMN. Residue K69 coordinates substrate. 114 to 118 (NRMGF) serves as a coordination point for substrate. FMN-binding residues include N145 and N178. Residue N178 coordinates substrate. S181 acts as the Nucleophile in catalysis. N183 lines the substrate pocket. FMN-binding residues include K223 and T251. 252-253 (NT) contributes to the substrate binding site. Residues G274, G303, and 324–325 (YS) contribute to the FMN site.

It belongs to the dihydroorotate dehydrogenase family. Type 2 subfamily. Monomer. Requires FMN as cofactor.

The protein localises to the cell membrane. It catalyses the reaction (S)-dihydroorotate + a quinone = orotate + a quinol. Its pathway is pyrimidine metabolism; UMP biosynthesis via de novo pathway; orotate from (S)-dihydroorotate (quinone route): step 1/1. Functionally, catalyzes the conversion of dihydroorotate to orotate with quinone as electron acceptor. The protein is Dihydroorotate dehydrogenase (quinone) of Cupriavidus taiwanensis (strain DSM 17343 / BCRC 17206 / CCUG 44338 / CIP 107171 / LMG 19424 / R1) (Ralstonia taiwanensis (strain LMG 19424)).